The primary structure comprises 337 residues: Ketol-acid reductoisomerase (NADP(+)) (337 aa).

A KARI N-terminal Rossmann domain is found at 1-180; the sequence is MQVYYDKDAD…GGTKGGVIET (180 aa). NADP(+) is bound by residues 24-27, arginine 47, and serine 51; that span reads YGSQ. Residue histidine 106 is part of the active site. Position 132 (glycine 132) interacts with NADP(+). In terms of domain architecture, KARI C-terminal knotted spans 181-326; the sequence is TFREETETDL…AQLRAMMPWI (146 aa). Aspartate 189, glutamate 193, glutamate 225, and glutamate 229 together coordinate Mg(2+). Substrate is bound at residue serine 250.

The protein belongs to the ketol-acid reductoisomerase family. Mg(2+) is required as a cofactor.

The catalysed reaction is (2R)-2,3-dihydroxy-3-methylbutanoate + NADP(+) = (2S)-2-acetolactate + NADPH + H(+). It catalyses the reaction (2R,3R)-2,3-dihydroxy-3-methylpentanoate + NADP(+) = (S)-2-ethyl-2-hydroxy-3-oxobutanoate + NADPH + H(+). It participates in amino-acid biosynthesis; L-isoleucine biosynthesis; L-isoleucine from 2-oxobutanoate: step 2/4. Its pathway is amino-acid biosynthesis; L-valine biosynthesis; L-valine from pyruvate: step 2/4. In terms of biological role, involved in the biosynthesis of branched-chain amino acids (BCAA). Catalyzes an alkyl-migration followed by a ketol-acid reduction of (S)-2-acetolactate (S2AL) to yield (R)-2,3-dihydroxy-isovalerate. In the isomerase reaction, S2AL is rearranged via a Mg-dependent methyl migration to produce 3-hydroxy-3-methyl-2-ketobutyrate (HMKB). In the reductase reaction, this 2-ketoacid undergoes a metal-dependent reduction by NADPH to yield (R)-2,3-dihydroxy-isovalerate. This Neisseria meningitidis serogroup A / serotype 4A (strain DSM 15465 / Z2491) protein is Ketol-acid reductoisomerase (NADP(+)).